Reading from the N-terminus, the 141-residue chain is Large ribosomal subunit protein uL11 (141 aa).

Belongs to the universal ribosomal protein uL11 family. As to quaternary structure, part of the ribosomal stalk of the 50S ribosomal subunit. Interacts with L10 and the large rRNA to form the base of the stalk. L10 forms an elongated spine to which L12 dimers bind in a sequential fashion forming a multimeric L10(L12)X complex. Post-translationally, one or more lysine residues are methylated.

Its function is as follows. Forms part of the ribosomal stalk which helps the ribosome interact with GTP-bound translation factors. This Parasynechococcus marenigrum (strain WH8102) protein is Large ribosomal subunit protein uL11.